Here is a 331-residue protein sequence, read N- to C-terminus: Ketol-acid reductoisomerase (NADP(+)) (331 aa).

One can recognise a KARI N-terminal Rossmann domain in the interval 2-182 (IKKYYDADCN…GAGRAGILET (181 aa)). Residues 25–28 (YGSQ), Arg48, and Ser51 each bind NADP(+). Residue His108 is part of the active site. An NADP(+)-binding site is contributed by Gly134. The KARI C-terminal knotted domain maps to 183–329 (TFREETETDL…AELRKMMSWI (147 aa)). Mg(2+) is bound by residues Asp191, Glu195, Glu227, and Glu231. Residue Ser252 participates in substrate binding.

Belongs to the ketol-acid reductoisomerase family. Mg(2+) is required as a cofactor.

The enzyme catalyses (2R)-2,3-dihydroxy-3-methylbutanoate + NADP(+) = (2S)-2-acetolactate + NADPH + H(+). It carries out the reaction (2R,3R)-2,3-dihydroxy-3-methylpentanoate + NADP(+) = (S)-2-ethyl-2-hydroxy-3-oxobutanoate + NADPH + H(+). It functions in the pathway amino-acid biosynthesis; L-isoleucine biosynthesis; L-isoleucine from 2-oxobutanoate: step 2/4. Its pathway is amino-acid biosynthesis; L-valine biosynthesis; L-valine from pyruvate: step 2/4. Functionally, involved in the biosynthesis of branched-chain amino acids (BCAA). Catalyzes an alkyl-migration followed by a ketol-acid reduction of (S)-2-acetolactate (S2AL) to yield (R)-2,3-dihydroxy-isovalerate. In the isomerase reaction, S2AL is rearranged via a Mg-dependent methyl migration to produce 3-hydroxy-3-methyl-2-ketobutyrate (HMKB). In the reductase reaction, this 2-ketoacid undergoes a metal-dependent reduction by NADPH to yield (R)-2,3-dihydroxy-isovalerate. This is Ketol-acid reductoisomerase (NADP(+)) from Brachyspira hyodysenteriae (strain ATCC 49526 / WA1).